Reading from the N-terminus, the 839-residue chain is Autophagy-related protein 9A (839 aa).

The tract at residues 1–21 (MAQFDTEYQRLEASYSDSPPG) is disordered. An N-acetylalanine modification is found at Ala2. The Cytoplasmic segment spans residues 2 to 61 (AQFDTEYQRLEASYSDSPPGEEDLLVHVPEGSKSPWHHIENLDLFFSRVYNLHQKNGFTC). A Tyrosine-based sorting signal motif is present at residues 8 to 11 (YQRL). Phosphoserine is present on residues Ser14, Ser16, and Ser18. The helical transmembrane segment at 62 to 84 (MLIGEIFELMQFLFVVAFTTFLV) threads the bilayer. Topologically, residues 85–128 (SCVDYDILFANKMVNHSLHPTEPVKVTLPDAFLPAQVCSARIQE) are lumenal. An N-linked (GlcNAc...) asparagine glycan is attached at Asn99. A helical transmembrane segment spans residues 129–154 (NGSLITILVIAGVFWVHRLIKFIYNI). The Cytoplasmic segment spans residues 155 to 290 (CCYWEIHSFY…ELAQRLSNRI (136 aa)). An intramembrane segment occupies 291–301 (LWIGIANFLLC). The Cytoplasmic segment spans residues 302–319 (PLILIWQILYAFFSYAEV). Residues 320–328 (LKREPGALG) lie within the membrane without spanning it. At 329–371 (ARCWSLYGRCYLRHFNELEHELQSRLNRGYKPASKYMNCFLSP) the chain is on the cytoplasmic side. Residues 372 to 397 (LLTLLAKNCAFFAGSILAVLIALTIY) form a helical membrane-spanning segment. Over 398–406 (DEDVLAVEH) the chain is Lumenal. The chain crosses the membrane as a helical span at residues 407–424 (VLTTVTLLGVTVTVCRSF). Topologically, residues 425 to 470 (IPDQHMVFCPEQLLRVILAHIHYMPDHWQGNAHRSQTRDEFAQLFQ) are cytoplasmic. The stretch at 471 to 480 (YKAVFILEEL) is an intramembrane region. At 481–483 (LSP) the chain is on the cytoplasmic side. An intramembrane segment occupies 484 to 492 (IVTPLILIF). Topologically, residues 493-839 (CLRPRALEII…DELPPQVHKV (347 aa)) are cytoplasmic. 5 positions are modified to phosphoserine: Ser656, Ser735, Ser738, Ser741, and Ser828. Disordered regions lie at residues 656–688 (SPLQ…GSSV) and 719–839 (QQAQ…VHKV). The span at 724–736 (EPERHVWHRRESD) shows a compositional bias: basic and acidic residues. Acidic residues-rich tracts occupy residues 737-747 (ESGESAPEEGG) and 823-832 (VPEEGSEDEL).

It belongs to the ATG9 family. As to quaternary structure, homotrimer; forms a homotrimer with a central pore that forms a path between the two membrane leaflets. Interacts (via cytoplasmic its C-terminus) with ATG2A. Interacts with SUPT20H. Interacts (via the tyrosine-based sorting signal motif) with AP4M1; promoting association with the AP-4 complex. Interacts with ARFIP1 and ARFIP2. Interacts with PI4K2A and PI4KB. Interacts with ATG4A; the interaction is direct and promotes ATG9A trafficking. Ufmylated in a DDRGK1 dependent manner.

The protein resides in the preautophagosomal structure membrane. It localises to the cytoplasmic vesicle. It is found in the autophagosome membrane. The protein localises to the golgi apparatus. Its subcellular location is the trans-Golgi network membrane. The protein resides in the late endosome membrane. It localises to the recycling endosome membrane. It is found in the endoplasmic reticulum membrane. The protein localises to the mitochondrion membrane. The enzyme catalyses a 1,2-diacyl-sn-glycero-3-phosphocholine(in) = a 1,2-diacyl-sn-glycero-3-phosphocholine(out). It catalyses the reaction a 1,2-diacyl-sn-glycero-3-phospho-L-serine(in) = a 1,2-diacyl-sn-glycero-3-phospho-L-serine(out). It carries out the reaction a 1,2-diacyl-sn-glycero-3-phosphoethanolamine(in) = a 1,2-diacyl-sn-glycero-3-phosphoethanolamine(out). Phospholipid scramblase involved in autophagy by mediating autophagosomal membrane expansion. Cycles between the preautophagosomal structure/phagophore assembly site (PAS) and the cytoplasmic vesicle pool and supplies membrane for the growing autophagosome. Lipid scramblase activity plays a key role in preautophagosomal structure/phagophore assembly by distributing the phospholipids that arrive through ATG2 (ATG2A or ATG2B) from the cytoplasmic to the luminal leaflet of the bilayer, thereby driving autophagosomal membrane expansion. Also required to supply phosphatidylinositol 4-phosphate to the autophagosome initiation site by recruiting the phosphatidylinositol 4-kinase beta (PI4KB) in a process dependent on ARFIP2, but not ARFIP1. In addition to autophagy, also plays a role in necrotic cell death. The protein is Autophagy-related protein 9A of Bos taurus (Bovine).